A 283-amino-acid polypeptide reads, in one-letter code: MKQYLELCRRIVDEGHWVENERTGKRCLTVINADLTYDVANNQFPLVTTRKSFWKAAVAELLGYIRGYDNAEDFRKLGTKTWDANANLNDAWLNNPYRKGDDDMGRVYGVQGRAWAKPDGGHIDQLRKIVDDLTRGVDDRGEILNFYNPGEFHMGCLRPCMYSHHFSLLGDTLYLNSTQRSCDVPLGLNFNMVQVYVFLAIMAQITGKKPGQAFHKIVNAHIYEDQLALMRDVQLKREPLQAPTFHINPEIKSLEDLETWVTLDDFWVEGYEHHDPIQYPFSV.

R22 is a dUMP binding site. C160 serves as the catalytic Nucleophile. DUMP-binding positions include 180-183 (RSCD), N191, and 221-223 (HIY). Residue D183 participates in (6R)-5,10-methylene-5,6,7,8-tetrahydrofolate binding. S282 contributes to the (6R)-5,10-methylene-5,6,7,8-tetrahydrofolate binding site.

It belongs to the thymidylate synthase family. Bacterial-type ThyA subfamily. As to quaternary structure, homodimer.

It localises to the cytoplasm. It catalyses the reaction dUMP + (6R)-5,10-methylene-5,6,7,8-tetrahydrofolate = 7,8-dihydrofolate + dTMP. It participates in pyrimidine metabolism; dTTP biosynthesis. Catalyzes the reductive methylation of 2'-deoxyuridine-5'-monophosphate (dUMP) to 2'-deoxythymidine-5'-monophosphate (dTMP) while utilizing 5,10-methylenetetrahydrofolate (mTHF) as the methyl donor and reductant in the reaction, yielding dihydrofolate (DHF) as a by-product. This enzymatic reaction provides an intracellular de novo source of dTMP, an essential precursor for DNA biosynthesis. In Vibrio vulnificus (strain YJ016), this protein is Thymidylate synthase.